Consider the following 862-residue polypeptide: Leucine--tRNA ligase (862 aa).

The short motif at Pro42–His52 is the 'HIGH' region element. Residues Lys614–Ser618 carry the 'KMSKS' region motif. Lys617 contacts ATP.

The protein belongs to the class-I aminoacyl-tRNA synthetase family.

It is found in the cytoplasm. The enzyme catalyses tRNA(Leu) + L-leucine + ATP = L-leucyl-tRNA(Leu) + AMP + diphosphate. In Syntrophus aciditrophicus (strain SB), this protein is Leucine--tRNA ligase.